The sequence spans 928 residues: MFSILQGHAGFSRDLATGIWREIKAEDYTFAKRFSKEHPEGKPASMPFKFDVIEEHDPQSLAEMLPLMRRLTSDPHIVAVRGRCLAPKNNVRRKKGNFNVSNPSNIIAMDVDGILDTGGYDKFNLVGMARHIIKMLNSISEDMFPLDAGFIAHASSSAGLKPGIRMHLMLESNVKVTQGQLKFLFTSINDSSKQKFGFDIADLAYYSSVQLHYFADPLFSDGIVDPFKAESKPRLVYVKGSKVNLPNNLVDYETTRGEFKEEFYSLLDQIKGKKIASDKVEETISELEEADDGVYLRIIPKLYHRALEDGVDFAWLEREIKPALSEYIATKDNSRNIQDYFNNGRKQALKAFVNNSKREIPLNLKGVPLKKLEVDSPPEVPYLKINIVPPKGHITFVKASLGTGKTTAVTKWLDAGVLPGNFLAVTNTRALVSSNAKKFSAGQYDKSVDMLNFKRGAIDRMSTTIHSLHKFKSFIGQIDTIFIDECDAVMNDLLFAPVVKQRRECIQVLRDILMTAKTVILSDGDISAETIEAYGSLIDFDKPVAFYNHHRKMLSKAHAYEFPDESSIWVALQTSLEMGEKSILVSDCGPDELNEKGMALRRNTGALVKEIHSNSTSDVDIRRILDYTTNELIDQQIDCLLCSPSVTSGVDFNYFDNVFVITRTSNQAPNMRFQAIRRDRGAQNIYYFIDKSTSGFSAGSEQYNIDEGWLELAQQLYARRRELESRNYTSTLRYYLLDQGATIDIFSESWGTIEGAGKEYTEERIKAILHSTPDYCAPRHADAYEAKLLLVRYYHLESIKDVTVEHVEQYIKDKPNDRAAFFHKMHEMFWEDIKKCSNVTIKPFIEALKGKKKDFFLKTGQSANPKYARMYLGMMGIGKDMNTENIVDWYRTYCKIECMPIPFKFMTEEERAMAEEVMSELGATNEDA.

Residues 386 to 516 (NIVPPKGHIT…QVLRDILMTA (131 aa)) enclose the Helicase ATP-binding domain. 399–406 (ASLGTGKT) contacts ATP. The short motif at 484–487 (DECD) is the DEAD box element.

It belongs to the herpesviridae oribp family.

Its function is as follows. Displays bipolar ssDNA and dsDNA unwinding activities that require the same core catalytic residues for unwinding in either direction, the 3'-5' direction being more robust. The chain is Putative replication origin binding protein from Escherichia coli (Enterobacteria phage T5).